The chain runs to 302 residues: Heme A synthase (302 aa).

Residues 1–8 (MFRKQNLK) are Cytoplasmic-facing. Residues 9–29 (WLGVLATIIMTFVQLGGALVT) form a helical membrane-spanning segment. The Extracellular segment spans residues 30–67 (KTGSEDGCGSSWPLCNGALLPENLPIQTIIELSHRAVS). A disulfide bridge connects residues cysteine 37 and cysteine 44. Glutamate 60 is a catalytic residue. Histidine 63 is a heme o binding site. The helical transmembrane segment at 68–88 (AISLIVVLWLVITAWKNIGYI) threads the bilayer. The Cytoplasmic portion of the chain corresponds to 89 to 93 (KEIKP). The helical transmembrane segment at 94 to 114 (LSIISVGFLLVQALVGAAAVI) threads the bilayer. Topologically, residues 115 to 125 (WQQNPYVLALH) are extracellular. Histidine 125 is a heme o binding site. A helical transmembrane segment spans residues 126–146 (FGISLISFSSVFLMTLIIFSI). Residues 147–161 (DKKYEADILFIHKPL) lie on the Cytoplasmic side of the membrane. The helical transmembrane segment at 162–182 (RILTWLMAIIVYLTIYTGALV) threads the bilayer. At 183–215 (RHTKSSLAYGAWPIPFDDIVPHNAHDWVQFSHR) the chain is on the extracellular side. Position 214 (histidine 214) interacts with heme b. A helical transmembrane segment spans residues 216–236 (GMAFITFIWIMITFIHAIKNY). Over 237–244 (SDNRTVRY) the chain is Cytoplasmic. A helical membrane pass occupies residues 245-265 (GYTASFILVILQVITGALSVI). Residues 266–270 (TNVNL) lie on the Extracellular side of the membrane. The helical transmembrane segment at 271 to 291 (IIALFHALFITYLFGMIAYFI) threads the bilayer. Residue histidine 276 coordinates heme b. Residues 292 to 302 (LLMLRTTRSLK) lie on the Cytoplasmic side of the membrane.

Belongs to the COX15/CtaA family. Type 1 subfamily. As to quaternary structure, interacts with CtaB. Requires heme b as cofactor.

It localises to the cell membrane. The catalysed reaction is Fe(II)-heme o + 2 A + H2O = Fe(II)-heme a + 2 AH2. The protein operates within porphyrin-containing compound metabolism; heme A biosynthesis; heme A from heme O: step 1/1. Functionally, catalyzes the conversion of heme O to heme A by two successive hydroxylations of the methyl group at C8. The first hydroxylation forms heme I, the second hydroxylation results in an unstable dihydroxymethyl group, which spontaneously dehydrates, resulting in the formyl group of heme A. The sequence is that of Heme A synthase from Staphylococcus epidermidis (strain ATCC 12228 / FDA PCI 1200).